The chain runs to 474 residues: MGSTAAPEGALGYVREFTRHSSDVLSNLNELRLRGILTDVTLLVGGQPLRAHKAVLIACSGFFYSIFRGRAGLGVDVLSLPGGPEARGFAPLLDFMYTSRLRLSPATAPAVLAAATYLQMEHVVQACHRFIQASYEPLGISLRPVEVEPPRPPTVAPPGSPRRSEGHPDPPTESRSCSQGSPSPASPDPKACNWKKYKFIVLNSQTSQAGSLVGESSGQPCPQARLPSGDEACSSSSSSEEGTTPGLQSRLSLATTTARFKCGALANNSYLFTPRAQETSLPASKQANPPPGSEFFSCQNCEAVAGCSSGLELLAPGDEDKPYKCQLCRSAFRYKGNLASHRTVHTGEKPYRCSICGARFNRPANLKTHSRIHSGEKPYKCETCGSRFVQVAHLRAHVLIHTGEKPYPCPTCGTRFRHLQTLKSHVRIHTGEKPYHCDPCGLHFRHKSQLRLHLRQKHGAATNTKVRYHILGGP.

A BTB domain is found at 38–105 (TDVTLLVGGQ…MYTSRLRLSP (68 aa)). 2 disordered regions span residues 144 to 190 (PVEV…PDPK) and 210 to 249 (GSLV…GLQS). Residues 150–160 (PRPPTVAPPGS) are compositionally biased toward pro residues. A compositionally biased stretch (basic and acidic residues) spans 162–172 (RRSEGHPDPPT). Polar residues-rich tracts occupy residues 173–183 (ESRSCSQGSPS), 210–220 (GSLVGESSGQP), and 240–249 (EEGTTPGLQS). 5 C2H2-type zinc fingers span residues 323–345 (YKCQ…RTVH), 351–373 (YRCS…SRIH), 379–401 (YKCE…VLIH), 407–429 (YPCP…VRIH), and 435–458 (YHCD…RQKH).

Associates with BCL6 through the BTB domain. Ubiquitously expressed with higher expression found in heart and lung.

The protein localises to the nucleus. In terms of biological role, acts as a sequence-specific transcriptional repressor in association with BCL6. Necessary for activation of naive T-cells to antigenic stimulation. May attenuate the regulatory effect of BCL6 on antigenic activation of naive CD4 T-cells by forming a heterodimer with BCL6. The chain is B-cell CLL/lymphoma 6 member B protein (Bcl6b) from Mus musculus (Mouse).